Here is a 639-residue protein sequence, read N- to C-terminus: 1-deoxy-D-xylulose-5-phosphate synthase (639 aa).

Residues histidine 79 and 120 to 122 (GHS) contribute to the thiamine diphosphate site. Aspartate 151 contributes to the Mg(2+) binding site. Residues 152-153 (GG), asparagine 180, tyrosine 288, and glutamate 370 contribute to the thiamine diphosphate site. Asparagine 180 lines the Mg(2+) pocket.

It belongs to the transketolase family. DXPS subfamily. Homodimer. It depends on Mg(2+) as a cofactor. The cofactor is thiamine diphosphate.

It carries out the reaction D-glyceraldehyde 3-phosphate + pyruvate + H(+) = 1-deoxy-D-xylulose 5-phosphate + CO2. The protein operates within metabolic intermediate biosynthesis; 1-deoxy-D-xylulose 5-phosphate biosynthesis; 1-deoxy-D-xylulose 5-phosphate from D-glyceraldehyde 3-phosphate and pyruvate: step 1/1. Functionally, catalyzes the acyloin condensation reaction between C atoms 2 and 3 of pyruvate and glyceraldehyde 3-phosphate to yield 1-deoxy-D-xylulose-5-phosphate (DXP). The chain is 1-deoxy-D-xylulose-5-phosphate synthase from Methylococcus capsulatus (strain ATCC 33009 / NCIMB 11132 / Bath).